The primary structure comprises 995 residues: Integrator complex subunit 8 (995 aa).

At Thr18 the chain carries Phosphothreonine. The short motif at 24-29 is the WFEF motif element; that stretch reads WFEFLL. TPR repeat units follow at residues 250–288, 320–356, 570–603, and 833–866; these read CQVCYDLGAAYFQQGSTDSAIYENAREKFFRTKELLAEI, SQQLTPYSQVHICLRSGSYQEVVQIFIEDNLTFTLPV, VYILMAKGLHCSTVKDFPHSKQLFTACLELVTEF, and HAWLIIQADIYFATNQHSAALHYYLQAGAVCSDF.

The protein belongs to the Integrator subunit 8 family. Component of the Integrator complex, composed of core subunits INTS1, INTS2, INTS3, INTS4, INTS5, INTS6, INTS7, INTS8, INTS9/RC74, INTS10, INTS11/CPSF3L, INTS12, INTS13, INTS14 and INTS15. The core complex associates with protein phosphatase 2A subunits PPP2CA and PPP2R1A, to form the Integrator-PP2A (INTAC) complex.

The protein resides in the nucleus. It localises to the chromosome. Component of the integrator complex, a multiprotein complex that terminates RNA polymerase II (Pol II) transcription in the promoter-proximal region of genes. The integrator complex provides a quality checkpoint during transcription elongation by driving premature transcription termination of transcripts that are unfavorably configured for transcriptional elongation: the complex terminates transcription by (1) catalyzing dephosphorylation of the C-terminal domain (CTD) of Pol II subunit POLR2A/RPB1 and SUPT5H/SPT5, (2) degrading the exiting nascent RNA transcript via endonuclease activity and (3) promoting the release of Pol II from bound DNA. The integrator complex is also involved in terminating the synthesis of non-coding Pol II transcripts, such as enhancer RNAs (eRNAs), small nuclear RNAs (snRNAs), telomerase RNAs and long non-coding RNAs (lncRNAs). Within the integrator complex, INTS8 is required for the recruitment of protein phosphatase 2A (PP2A) to transcription pause-release checkpoint. The protein is Integrator complex subunit 8 (Ints8) of Mus musculus (Mouse).